The primary structure comprises 420 residues: Interleukin-5 receptor subunit alpha (420 aa).

An N-terminal signal peptide occupies residues 1 to 20 (MIIVAHVLLILLGATEILQA). Residues 21-342 (DLLPDEKISL…NDEHKPLREW (322 aa)) lie on the Extracellular side of the membrane. Residues 32–123 (PPVNFTIKVT…ASAELHAPPG (92 aa)) form the Fibronectin type-III 1 domain. N-linked (GlcNAc...) asparagine glycosylation is found at asparagine 35 and asparagine 131. Cystine bridges form between cysteine 134–cysteine 155 and cysteine 182–cysteine 196. Residues asparagine 216 and asparagine 244 are each glycosylated (N-linked (GlcNAc...) asparagine). The 94-residue stretch at 241-334 (PPLNVTAEIE…WSQPIYVGND (94 aa)) folds into the Fibronectin type-III 2 domain. Residues cysteine 269 and cysteine 316 are joined by a disulfide bond. The WSXWS motif signature appears at 322-326 (WSEWS). A helical transmembrane segment spans residues 343-362 (FVIVIMATICFILLILSLIC). Residues 363-420 (KICHLWIKLFPPIPAPKSNIKDLFVTTNYEKAGSSETEIEVICYIEKPGVETLEDSVF) are Cytoplasmic-facing. The Box 1 motif signature appears at 371–379 (LFPPIPAPK).

This sequence belongs to the type I cytokine receptor family. Type 5 subfamily. Interacts with IL5. Interacts with CSF2RB. Interacts with JAK2. Interacts with SDCBP. Expressed on eosinophils and basophils.

It localises to the membrane. In terms of biological role, cell surface receptor that plays an important role in the survival, differentiation, and chemotaxis of eosinophils. Acts by forming a heterodimeric receptor with CSF2RB subunit and subsequently binding to interleukin-5. In unstimulated conditions, interacts constitutively with JAK2. Heterodimeric receptor activation leads to JAK2 stimulation and subsequent activation of the JAK-STAT pathway. This Homo sapiens (Human) protein is Interleukin-5 receptor subunit alpha (IL5RA).